Consider the following 35-residue polypeptide: Cytochrome c-550 (35 aa).

Positions 17, 20, and 21 each coordinate heme c.

In terms of processing, binds 1 heme c group covalently per subunit.

Monoheme cytochrome which functions as an electron carrier in the reduction of nitrite by membrane vesicles. The chain is Cytochrome c-550 from Virgibacillus halodenitrificans (Bacillus halodenitrificans).